A 951-amino-acid chain; its full sequence is Serine/threonine-protein phosphatase 4 regulatory subunit 1 (951 aa).

HEAT repeat units lie at residues Glu-26–Arg-63, Arg-82–Glu-119, Ala-127–Ile-164, Asp-168–Lys-206, Ile-208–Gln-246, Ala-248–Gln-285, and Ile-287–Asn-324. Disordered stretches follow at residues Ser-326–Val-395, Ser-407–Arg-501, His-539–Glu-569, and Gly-592–Pro-612. Composition is skewed to basic and acidic residues over residues Phe-332–Asp-360, Asp-464–Gly-483, and His-539–Leu-551. The stretch at Lys-502–His-539 is one HEAT 8 repeat. A compositionally biased stretch (gly residues) spans Ala-594–Phe-604. HEAT repeat units follow at residues Leu-699–Ile-735, Arg-777–Met-815, Thr-820–Leu-858, and Gln-862–Tyr-899. Ser-936 is subject to Phosphoserine.

In terms of assembly, serine/threonine-protein phosphatase 4 (PP4) occurs in different assemblies of the catalytic and one or more regulatory subunits. Component of the PP4 complex PPP4C-PPP4R1. Interacts with HDAC3.

Functionally, regulatory subunit of serine/threonine-protein phosphatase 4. May play a role in regulation of cell division in renal glomeruli. The PPP4C-PPP4R1 PP4 complex may play a role in dephosphorylation and regulation of HDAC3. Plays a role in the inhibition of TNF-induced NF-kappa-B activation by regulating the dephosphorylation of TRAF2. In Rattus norvegicus (Rat), this protein is Serine/threonine-protein phosphatase 4 regulatory subunit 1 (Ppp4r1).